Here is a 211-residue protein sequence, read N- to C-terminus: Protein-L-isoaspartate O-methyltransferase (211 aa).

Serine 62 is a catalytic residue.

Belongs to the methyltransferase superfamily. L-isoaspartyl/D-aspartyl protein methyltransferase family.

The protein resides in the cytoplasm. It catalyses the reaction [protein]-L-isoaspartate + S-adenosyl-L-methionine = [protein]-L-isoaspartate alpha-methyl ester + S-adenosyl-L-homocysteine. Catalyzes the methyl esterification of L-isoaspartyl residues in peptides and proteins that result from spontaneous decomposition of normal L-aspartyl and L-asparaginyl residues. It plays a role in the repair and/or degradation of damaged proteins. This chain is Protein-L-isoaspartate O-methyltransferase, found in Shewanella amazonensis (strain ATCC BAA-1098 / SB2B).